We begin with the raw amino-acid sequence, 699 residues long: Polyribonucleotide nucleotidyltransferase (699 aa).

Mg(2+)-binding residues include D493 and D499. Positions 560-620 (PLIANIEIDP…NKVNQAIEYI (61 aa)) constitute a KH domain. The S1 motif domain occupies 630 to 697 (GDMFEGKITR…DSGRIQLGKA (68 aa)).

Belongs to the polyribonucleotide nucleotidyltransferase family. The cofactor is Mg(2+).

The protein resides in the cytoplasm. The enzyme catalyses RNA(n+1) + phosphate = RNA(n) + a ribonucleoside 5'-diphosphate. Its function is as follows. Involved in mRNA degradation. Catalyzes the phosphorolysis of single-stranded polyribonucleotides processively in the 3'- to 5'-direction. This Thermosipho melanesiensis (strain DSM 12029 / CIP 104789 / BI429) protein is Polyribonucleotide nucleotidyltransferase.